Reading from the N-terminus, the 101-residue chain is Small ribosomal subunit protein uS14 (101 aa).

Belongs to the universal ribosomal protein uS14 family. In terms of assembly, part of the 30S ribosomal subunit. Contacts proteins S3 and S10.

In terms of biological role, binds 16S rRNA, required for the assembly of 30S particles and may also be responsible for determining the conformation of the 16S rRNA at the A site. The chain is Small ribosomal subunit protein uS14 from Serratia proteamaculans (strain 568).